A 137-amino-acid chain; its full sequence is Small heat shock protein IbpA (137 aa).

The region spanning 28 to 137 (SQSNGGYPPY…ANKPRRIEIN (110 aa)) is the sHSP domain.

The protein belongs to the small heat shock protein (HSP20) family. As to quaternary structure, monomer. Forms homomultimers of about 100-150 subunits at optimal growth temperatures. Conformation changes to monomers at high temperatures or high ionic concentrations.

The protein resides in the cytoplasm. Associates with aggregated proteins, together with IbpB, to stabilize and protect them from irreversible denaturation and extensive proteolysis during heat shock and oxidative stress. Aggregated proteins bound to the IbpAB complex are more efficiently refolded and reactivated by the ATP-dependent chaperone systems ClpB and DnaK/DnaJ/GrpE. Its activity is ATP-independent. This is Small heat shock protein IbpA from Salmonella choleraesuis (strain SC-B67).